Reading from the N-terminus, the 546-residue chain is uncharacterized protein (546 aa).

5 consecutive transmembrane segments (helical) span residues 4 to 23, 30 to 47, 57 to 79, 91 to 113, and 155 to 177; these read ILLENPLLVLFLVAAIGYPL, GSSLGVAAVLFVGLAMGS, IVYVLGLALFVYTIGLSSGPAFV, ALIIGMLLVAAGLVVGAQRLLGF, and PVVGYSVAYPMGVMGVVLAISLV. RCK C-terminal domains are found at residues 189-274 and 275-359; these read GKRL…FLGE and VSEE…FFGD. A run of 6 helical transmembrane segments spans residues 372–394, 399–421, 434–456, 460–482, 489–511, and 521–543; these read FSLGLALGLLLGIIPIPLPGGIT, FAGGPLIVALILGTIGRSGSMVW, IGLVLFLAGVGTRAGYGFVTTLA, GLAIFAAGAVVTCLTALATLWIG, PMSILIGMVAGLQTQPAVLGYAL, and IGYASVYPVATISKILIVQILLT.

The protein belongs to the AAE transporter (TC 2.A.81) family.

It is found in the cell membrane. This is an uncharacterized protein from Geobacter sulfurreducens (strain ATCC 51573 / DSM 12127 / PCA).